Here is a 508-residue protein sequence, read N- to C-terminus: Drug efflux pump JefA (508 aa).

14 helical membrane-spanning segments follow: residues 9-29 (VLAT…VNVA), 46-66 (WAVA…ALLG), 75-95 (FVFG…PVSL), 104-124 (IQGL…SHSF), 136-156 (NWMA…GLMV), 163-183 (SVFL…LVGV), 194-214 (LDWV…YTII), 222-242 (QSAG…WLFV), 265-285 (SVLI…MVIT), 297-317 (LHAG…SLLA), 328-348 (LPVL…AISM), 354-374 (VALV…TPLL), 399-419 (LGGI…LGAA), and 479-499 (GIKL…VLGW).

This sequence belongs to the major facilitator superfamily.

It localises to the cell inner membrane. Functionally, involved in resistance to ethambutol and isoniazid. The protein is Drug efflux pump JefA of Mycobacterium tuberculosis (strain CDC 1551 / Oshkosh).